Here is a 317-residue protein sequence, read N- to C-terminus: Serpentine receptor class delta-47 (317 aa).

7 helical membrane-spanning segments follow: residues Ile-8 to Val-28, Val-42 to Leu-62, Cys-89 to Ile-109, Ile-128 to Val-148, Tyr-185 to Thr-205, Ala-239 to Thr-259, and Ile-270 to Ala-290.

This sequence belongs to the nematode receptor-like protein srd family.

Its subcellular location is the membrane. This chain is Serpentine receptor class delta-47 (srd-47), found in Caenorhabditis elegans.